The sequence spans 528 residues: GMP synthase [glutamine-hydrolyzing] (528 aa).

Positions 13–204 (AIVILDFGSQ…VYHICGCEPD (192 aa)) constitute a Glutamine amidotransferase type-1 domain. The active-site Nucleophile is the C90. Catalysis depends on residues H178 and E180. Residues 205–403 (WTTSAFIDEA…LGLPEEIVRR (199 aa)) form the GMPS ATP-PPase domain. 232–238 (SGGVDSS) serves as a coordination point for ATP.

Homodimer.

The catalysed reaction is XMP + L-glutamine + ATP + H2O = GMP + L-glutamate + AMP + diphosphate + 2 H(+). It participates in purine metabolism; GMP biosynthesis; GMP from XMP (L-Gln route): step 1/1. Its function is as follows. Catalyzes the synthesis of GMP from XMP. This is GMP synthase [glutamine-hydrolyzing] from Parasynechococcus marenigrum (strain WH8102).